Consider the following 301-residue polypeptide: Homoserine kinase (301 aa).

89-99 (KPGSGLGSSSA) is a binding site for ATP.

Belongs to the GHMP kinase family. Homoserine kinase subfamily.

It localises to the cytoplasm. It carries out the reaction L-homoserine + ATP = O-phospho-L-homoserine + ADP + H(+). Its pathway is amino-acid biosynthesis; L-threonine biosynthesis; L-threonine from L-aspartate: step 4/5. In terms of biological role, catalyzes the ATP-dependent phosphorylation of L-homoserine to L-homoserine phosphate. The chain is Homoserine kinase from Methanococcus maripaludis (strain DSM 14266 / JCM 13030 / NBRC 101832 / S2 / LL).